The sequence spans 166 residues: Large ribosomal subunit protein uL10 (166 aa).

This sequence belongs to the universal ribosomal protein uL10 family. Part of the ribosomal stalk of the 50S ribosomal subunit. The N-terminus interacts with L11 and the large rRNA to form the base of the stalk. The C-terminus forms an elongated spine to which L12 dimers bind in a sequential fashion forming a multimeric L10(L12)X complex.

In terms of biological role, forms part of the ribosomal stalk, playing a central role in the interaction of the ribosome with GTP-bound translation factors. This Limosilactobacillus reuteri (strain DSM 20016) (Lactobacillus reuteri) protein is Large ribosomal subunit protein uL10.